Reading from the N-terminus, the 320-residue chain is Small ribosomal subunit protein uS2 (320 aa).

Over residues 1–22 the composition is skewed to acidic residues; the sequence is MADETTTDTPDVQDEDAPDEDA. The tract at residues 1–83 is disordered; the sequence is MADETTTDTP…SSSEEETSHR (83 aa). Residues 27–41 are compositionally biased toward low complexity; the sequence is DDTASDSTGEAAAAD. Composition is skewed to acidic residues over residues 42–57 and 65–78; these read TDAD…EDAP and DDGD…SSEE.

It belongs to the universal ribosomal protein uS2 family.

This is Small ribosomal subunit protein uS2 from Salinibacter ruber (strain DSM 13855 / M31).